A 298-amino-acid chain; its full sequence is MGTEARAGRRQLLVFTSVVLSSLALGRGAVYTSEPDVRVPEDKPAKLSCSYSGFSNPRVEWKFAHGDITSLVCYKNKITASYADRVTFSHSGITFHSVTRKDTGTYTCMVSDDGGNTYGEVSVQLTVLVPPSKPTVHIPSSATIGSRAVLTCSEKDGSPPSEYYWFKDGVRMPLEPKGNRAFSNSSYSLNEKTGELVFDPVSAWDTGEYTCEAQNGYGMPMRSEAVRMEAAELNVGGIVAAVLVTLILLGFLILGIWFAYRRGYFDRTKKGTSSKKVIYSQPAARSEGEFRQTSSFLV.

An N-terminal signal peptide occupies residues 1–28; it reads MGTEARAGRRQLLVFTSVVLSSLALGRG. Ig-like V-type domains follow at residues 29–126 and 134–227; these read AVYT…VQLT and PTVH…EAVR. Residues 29 to 237 are Extracellular-facing; it reads AVYTSEPDVR…MEAAELNVGG (209 aa). 2 disulfide bridges follow: C49/C108 and C152/C211. N184 carries an N-linked (GlcNAc...) asparagine glycan. Residues 238–258 traverse the membrane as a helical segment; that stretch reads IVAAVLVTLILLGFLILGIWF. At 259-298 the chain is on the cytoplasmic side; the sequence is AYRRGYFDRTKKGTSSKKVIYSQPAARSEGEFRQTSSFLV. S280 and S286 each carry phosphoserine.

The protein belongs to the immunoglobulin superfamily. As to quaternary structure, interacts with the ninth PDZ domain of MPDZ. Interacts with the first PDZ domain of PARD3. The association between PARD3 and PARD6B probably disrupts this interaction. Interacts with ITGAL (via I-domain). Interacts with CD151. In terms of assembly, (Microbial infection) Interacts with calicivirus capsid protein. (Microbial infection) Interacts with the orthoreovirus sigma-1 capsid protein.

Its subcellular location is the cell junction. The protein resides in the tight junction. It is found in the cell membrane. Its function is as follows. Seems to play a role in epithelial tight junction formation. Appears early in primordial forms of cell junctions and recruits PARD3. The association of the PARD6-PARD3 complex may prevent the interaction of PARD3 with JAM1, thereby preventing tight junction assembly. Plays a role in regulating monocyte transmigration involved in integrity of epithelial barrier. Ligand for integrin alpha-L/beta-2 involved in memory T-cell and neutrophil transmigration. Involved in platelet activation. (Microbial infection) Acts as a functional receptor for murine norovirus. Functionally, (Microbial infection) In case of orthoreovirus infection, serves as receptor for the virus. In Felis catus (Cat), this protein is Junctional adhesion molecule A (F11R).